The following is a 410-amino-acid chain: Multifunctional CCA protein (410 aa).

2 residues coordinate ATP: Gly-8 and Arg-11. Residues Gly-8 and Arg-11 each contribute to the CTP site. Glu-21 and Asp-23 together coordinate Mg(2+). Residues Arg-91, Arg-137, and Arg-140 each contribute to the ATP site. Arg-91, Arg-137, and Arg-140 together coordinate CTP. One can recognise an HD domain in the interval 228 to 329 (TGIHVMMALR…LKLFDRLDVW (102 aa)).

Belongs to the tRNA nucleotidyltransferase/poly(A) polymerase family. Bacterial CCA-adding enzyme type 1 subfamily. Monomer. Can also form homodimers and oligomers. The cofactor is Mg(2+). Ni(2+) is required as a cofactor.

The enzyme catalyses a tRNA precursor + 2 CTP + ATP = a tRNA with a 3' CCA end + 3 diphosphate. It carries out the reaction a tRNA with a 3' CCA end + 2 CTP + ATP = a tRNA with a 3' CCACCA end + 3 diphosphate. In terms of biological role, catalyzes the addition and repair of the essential 3'-terminal CCA sequence in tRNAs without using a nucleic acid template. Adds these three nucleotides in the order of C, C, and A to the tRNA nucleotide-73, using CTP and ATP as substrates and producing inorganic pyrophosphate. tRNA 3'-terminal CCA addition is required both for tRNA processing and repair. Also involved in tRNA surveillance by mediating tandem CCA addition to generate a CCACCA at the 3' terminus of unstable tRNAs. While stable tRNAs receive only 3'-terminal CCA, unstable tRNAs are marked with CCACCA and rapidly degraded. The polypeptide is Multifunctional CCA protein (Tolumonas auensis (strain DSM 9187 / NBRC 110442 / TA 4)).